The sequence spans 498 residues: Phenylalanine--tRNA ligase alpha subunit (498 aa).

Residues Thr328, Gln372 to Glu374, and Tyr412 contribute to the L-phenylalanine site. A Mg(2+)-binding site is contributed by Glu414. Phe438 serves as a coordination point for L-phenylalanine.

This sequence belongs to the class-II aminoacyl-tRNA synthetase family. Phe-tRNA synthetase alpha subunit type 2 subfamily. As to quaternary structure, tetramer of two alpha and two beta subunits. The cofactor is Mg(2+).

It localises to the cytoplasm. The catalysed reaction is tRNA(Phe) + L-phenylalanine + ATP = L-phenylalanyl-tRNA(Phe) + AMP + diphosphate + H(+). The protein is Phenylalanine--tRNA ligase alpha subunit of Drosophila melanogaster (Fruit fly).